The sequence spans 173 residues: uncharacterized protein (173 aa).

4 consecutive transmembrane segments (helical) span residues 9–29, 32–52, 100–120, and 127–147; these read FSICICQIFIIYFIFFLLLCV, ICSALSNGFNFLIIYGGTFFH, MFLCFFSSIVFASAFVFSFIV, and FLFLSLNSGFSFTGYITGLYP.

Its subcellular location is the membrane. This is an uncharacterized protein from Saccharomyces cerevisiae (strain ATCC 204508 / S288c) (Baker's yeast).